Here is a 180-residue protein sequence, read N- to C-terminus: Adenine phosphoribosyltransferase (180 aa).

Serine 2 carries the post-translational modification N-acetylserine. Phosphoserine is present on residues serine 4, serine 15, and serine 30. Phosphotyrosine is present on tyrosine 60. At serine 66 the chain carries Phosphoserine. Residue lysine 114 is modified to N6-acetyllysine. Threonine 135 carries the post-translational modification Phosphothreonine.

This sequence belongs to the purine/pyrimidine phosphoribosyltransferase family. As to quaternary structure, homodimer.

The protein localises to the cytoplasm. The catalysed reaction is AMP + diphosphate = 5-phospho-alpha-D-ribose 1-diphosphate + adenine. Its pathway is purine metabolism; AMP biosynthesis via salvage pathway; AMP from adenine: step 1/1. Functionally, catalyzes a salvage reaction resulting in the formation of AMP, that is energically less costly than de novo synthesis. The polypeptide is Adenine phosphoribosyltransferase (Rattus norvegicus (Rat)).